Here is a 297-residue protein sequence, read N- to C-terminus: Transmembrane protein 169 (297 aa).

Residues 1 to 84 (MEEPALVEGQ…PKEEEGDDFI (84 aa)) are disordered. The Extracellular portion of the chain corresponds to 1–159 (MEEPALVEGQ…CQLGADRGPH (159 aa)). Positions 9–18 (GQSQLPSPHH) are enriched in polar residues. The span at 60–84 (ETLDEEPGESEGGDQPKEEEGDDFI) shows a compositional bias: acidic residues. Residues 160 to 180 (VVLWTLVCLPVVFLLSFVVSF) form a helical membrane-spanning segment. Residues 181-210 (YYGTITWYNIFLVYNEERTFWHKISCCPCL) are Cytoplasmic-facing. Residues 211–231 (ILCYPVLIMAMASSLGLYAAV) form a helical membrane-spanning segment. The Extracellular portion of the chain corresponds to 232–297 (VQLSWSWEAW…ATQEIETSAV (66 aa)).

It is found in the membrane. This Bos taurus (Bovine) protein is Transmembrane protein 169 (TMEM169).